We begin with the raw amino-acid sequence, 93 residues long: Sec-independent protein translocase protein TatA (93 aa).

A helical membrane pass occupies residues Met-1–Phe-21. The interval Asp-49–Lys-93 is disordered. Positions Ser-60–Ser-70 are enriched in polar residues. Residues Lys-75–Lys-93 show a composition bias toward basic and acidic residues.

Belongs to the TatA/E family. In terms of assembly, the Tat system comprises two distinct complexes: a TatABC complex, containing multiple copies of TatA, TatB and TatC subunits, and a separate TatA complex, containing only TatA subunits. Substrates initially bind to the TatABC complex, which probably triggers association of the separate TatA complex to form the active translocon.

The protein localises to the cell membrane. Part of the twin-arginine translocation (Tat) system that transports large folded proteins containing a characteristic twin-arginine motif in their signal peptide across membranes. TatA could form the protein-conducting channel of the Tat system. The polypeptide is Sec-independent protein translocase protein TatA (Tropheryma whipplei (strain TW08/27) (Whipple's bacillus)).